A 170-amino-acid polypeptide reads, in one-letter code: Thioredoxin-like protein YneN (170 aa).

The helical transmembrane segment at 5–23 (WLAGILLIMLVGYTGWNLY) threads the bilayer. The region spanning 33–170 (IQEGQQAPDF…KEMEQKLDLD (138 aa)) is the Thioredoxin domain. Cysteine 71 and cysteine 74 form a disulfide bridge.

It belongs to the thioredoxin family.

It localises to the cell membrane. The chain is Thioredoxin-like protein YneN (yneN) from Bacillus subtilis (strain 168).